The chain runs to 51 residues: Probable antitoxin PhoAT (51 aa).

The protein belongs to the PhoAT antitoxin family. As to quaternary structure, interacts with toxin PhoH2.

Antitoxin component of a type II toxin-antitoxin (TA) system. The cognate antitoxin is PhoAT; the toxin gene cannot be expressed in the absence of the antitoxin gene in M.smegmatis (strain mc(2)4517), and abrogates the toxic effects of PhoH2 in M.smegmatis strain mc(2)155. This chain is Probable antitoxin PhoAT, found in Mycobacterium tuberculosis (strain ATCC 25618 / H37Rv).